The chain runs to 446 residues: MSLINFDSSKLTPFVHENELGEMQAMVNAANTELRNGTGAGSDFRGWLDLPVDYDKDEFARIKKAAKKIQGDSEVLICIGIGGSYLGAQAAIELLNSNFYGKEKTDMPIVVFCGNSLSGSYLYDLIEWLGDKDFSINVISKSGTTTEPSVAFRIFKDKLIKKYGKEEAAKRIYATTDRQKGALKTEADAEGYEEFVVPDDIGGRYSVLTAVGLLPIAAAGADIDALMKGAADARADYTDTDVHKNSPYQYAALRNILYRKGYTTEIVENYEPSLRMFGEWCKQLMGESEGKDNKGIWPSSANFTTDLHSLGQYIQEGLRNLFETVIRVENPRHDVKIPGDEKNLDQLNFLEGKSLNYVNDRAYEGVVLAHTDGGVPVMTVNIPDQTEHTLGYMIYFFELAIAISGYLNGINPFNQPGVEEYKRNMFGLLNKPGYENLHDDLTKRLK.

Glu287 functions as the Proton donor in the catalytic mechanism. Active-site residues include His308 and Lys422.

This sequence belongs to the GPI family.

It is found in the cytoplasm. It carries out the reaction alpha-D-glucose 6-phosphate = beta-D-fructose 6-phosphate. Its pathway is carbohydrate biosynthesis; gluconeogenesis. It participates in carbohydrate degradation; glycolysis; D-glyceraldehyde 3-phosphate and glycerone phosphate from D-glucose: step 2/4. Catalyzes the reversible isomerization of glucose-6-phosphate to fructose-6-phosphate. In Lactobacillus helveticus (strain DPC 4571), this protein is Glucose-6-phosphate isomerase.